We begin with the raw amino-acid sequence, 278 residues long: 3-methyl-2-oxobutanoate hydroxymethyltransferase (278 aa).

Mg(2+) contacts are provided by Asp-43 and Asp-82. Residues 43–44 (DS), Asp-82, and Lys-112 each bind 3-methyl-2-oxobutanoate. Residue Glu-114 participates in Mg(2+) binding. Glu-181 acts as the Proton acceptor in catalysis.

This sequence belongs to the PanB family. As to quaternary structure, homodecamer; pentamer of dimers. Mg(2+) serves as cofactor.

The protein resides in the cytoplasm. The enzyme catalyses 3-methyl-2-oxobutanoate + (6R)-5,10-methylene-5,6,7,8-tetrahydrofolate + H2O = 2-dehydropantoate + (6S)-5,6,7,8-tetrahydrofolate. It participates in cofactor biosynthesis; (R)-pantothenate biosynthesis; (R)-pantoate from 3-methyl-2-oxobutanoate: step 1/2. Its function is as follows. Catalyzes the reversible reaction in which hydroxymethyl group from 5,10-methylenetetrahydrofolate is transferred onto alpha-ketoisovalerate to form ketopantoate. The sequence is that of 3-methyl-2-oxobutanoate hydroxymethyltransferase from Bacillus cereus (strain ATCC 10987 / NRS 248).